Consider the following 308-residue polypeptide: Polyprenal reductase (308 aa).

Over M1–T2 the chain is Cytoplasmic. Residues L3–L23 form a helical membrane-spanning segment. The Lumenal segment spans residues L24–R65. Residues C66–L86 traverse the membrane as a helical segment. Residues R87–S120 are Cytoplasmic-facing. Residues V121 to F141 traverse the membrane as a helical segment. Over V142–G148 the chain is Lumenal. The chain crosses the membrane as a helical span at residues V149–V169. At L170–N184 the chain is on the cytoplasmic side. The helical transmembrane segment at L185 to L205 threads the bilayer. The Lumenal portion of the chain corresponds to H206–S255. A helical membrane pass occupies residues I256 to L276. At N277–F308 the chain is on the cytoplasmic side.

This sequence belongs to the steroid 5-alpha reductase family. Polyprenal reductase subfamily.

Its subcellular location is the endoplasmic reticulum membrane. The catalysed reaction is a di-trans,poly-cis-dolichal + NADP(+) = a di-trans,poly-cis-polyprenal + NADPH + H(+). The enzyme catalyses a 3-oxo-5alpha-steroid + NADP(+) = a 3-oxo-Delta(4)-steroid + NADPH + H(+). It catalyses the reaction androst-4-ene-3,17-dione + NADPH + H(+) = 5alpha-androstan-3,17-dione + NADP(+). It carries out the reaction 17beta-hydroxy-5alpha-androstan-3-one + NADP(+) = testosterone + NADPH + H(+). The protein operates within protein modification; protein glycosylation. Plays a key role in early steps of protein N-linked glycosylation by being involved in the conversion of polyprenol into dolichol. Acts as a polyprenal reductase that mediates the reduction of polyprenal into dolichal in a NADP-dependent mechanism. Dolichols are required for the synthesis of dolichol-linked monosaccharides and the oligosaccharide precursor used for N-glycosylation. Also able to convert testosterone (T) into 5-alpha-dihydrotestosterone (DHT). The polypeptide is Polyprenal reductase (srd5a3) (Xenopus tropicalis (Western clawed frog)).